Reading from the N-terminus, the 188-residue chain is ATP synthase subunit b (188 aa).

Residues 5 to 25 (MLLIFMMIVMIASSAMAAEAE) traverse the membrane as a helical segment.

It belongs to the ATPase B chain family. In terms of assembly, F-type ATPases have 2 components, F(1) - the catalytic core - and F(0) - the membrane proton channel. F(1) has five subunits: alpha(3), beta(3), gamma(1), delta(1), epsilon(1). F(0) has three main subunits: a(1), b(2) and c(10-14). The alpha and beta chains form an alternating ring which encloses part of the gamma chain. F(1) is attached to F(0) by a central stalk formed by the gamma and epsilon chains, while a peripheral stalk is formed by the delta and b chains.

Its subcellular location is the cell inner membrane. In terms of biological role, f(1)F(0) ATP synthase produces ATP from ADP in the presence of a proton or sodium gradient. F-type ATPases consist of two structural domains, F(1) containing the extramembraneous catalytic core and F(0) containing the membrane proton channel, linked together by a central stalk and a peripheral stalk. During catalysis, ATP synthesis in the catalytic domain of F(1) is coupled via a rotary mechanism of the central stalk subunits to proton translocation. Component of the F(0) channel, it forms part of the peripheral stalk, linking F(1) to F(0). The sequence is that of ATP synthase subunit b from Thermodesulfovibrio yellowstonii (strain ATCC 51303 / DSM 11347 / YP87).